The following is a 409-amino-acid chain: Probable tRNA N6-adenosine threonylcarbamoyltransferase, mitochondrial (409 aa).

The transit peptide at 1–31 (MHALRNFAGNGIANVFGCGIRRRLSYVLGIE) directs the protein to the mitochondrion. Residues His135 and His139 each contribute to the a divalent metal cation site. Residues 159–163 (LASGG), Asp192, Gly212, Glu216, 322–323 (NN), and Ser350 each bind substrate. Position 351 (Asp351) interacts with a divalent metal cation.

Belongs to the KAE1 / TsaD family. Homodimer. A divalent metal cation serves as cofactor.

It is found in the mitochondrion. It catalyses the reaction L-threonylcarbamoyladenylate + adenosine(37) in tRNA = N(6)-L-threonylcarbamoyladenosine(37) in tRNA + AMP + H(+). Its function is as follows. Required for the formation of a threonylcarbamoyl group on adenosine at position 37 (t(6)A37) in mitochondrial tRNAs that read codons beginning with adenine. Probably involved in the transfer of the threonylcarbamoyl moiety of threonylcarbamoyl-AMP (TC-AMP) to the N6 group of A37. Involved in mitochondrial genome maintenance. The polypeptide is Probable tRNA N6-adenosine threonylcarbamoyltransferase, mitochondrial (Drosophila melanogaster (Fruit fly)).